The following is a 610-amino-acid chain: Zinc metalloproteinase-disintegrin-like 3a (610 aa).

The signal sequence occupies residues 1-19; that stretch reads MIQVLLVTILAVFPYQGSS. Positions 20 to 188 are excised as a propeptide; sequence IILGSGNVND…KKASQLVVTA (169 aa). In terms of domain architecture, Peptidase M12B spans 198 to 394; sequence RYVELVIVAD…YTPKCILNEP (197 aa). Glu201 provides a ligand contact to Ca(2+). Asn217 is a glycosylation site (N-linked (GlcNAc...) asparagine). Asp285 contributes to the Ca(2+) binding site. 3 disulfide bridges follow: Cys309/Cys389, Cys349/Cys373, and Cys351/Cys356. His334 is a binding site for Zn(2+). Glu335 is a catalytic residue. Residues His338 and His344 each contribute to the Zn(2+) site. Ca(2+)-binding residues include Cys389, Asn392, Val404, Asn407, Glu411, Glu414, and Asp417. A Disintegrin domain is found at 402-488; the sequence is PPVCGNELLE…DCPTDDFHKN (87 aa). 14 disulfide bridges follow: Cys405-Cys434, Cys416-Cys429, Cys418-Cys424, Cys428-Cys451, Cys442-Cys448, Cys447-Cys473, Cys460-Cys480, Cys467-Cys499, Cys492-Cys504, Cys511-Cys561, Cys526-Cys572, Cys539-Cys549, Cys556-Cys598, and Cys592-Cys603. Residues 466–468 carry the D/ECD-tripeptide motif; sequence ECD.

Belongs to the venom metalloproteinase (M12B) family. P-III subfamily. Requires Zn(2+) as cofactor. In terms of tissue distribution, expressed by the venom gland.

The protein resides in the secreted. Its function is as follows. Snake venom metalloproteinase that impairs hemostasis in the envenomed animal. This is Zinc metalloproteinase-disintegrin-like 3a from Crotalus adamanteus (Eastern diamondback rattlesnake).